The sequence spans 953 residues: MILQEGLPLLYQQFTALFGKNLLLSWRNKRATCLQIFSSFFFILLIFCIEEAMKASDASSSAYKNITDPTLLVSPPILPCEDKFFVKLPCYDFVWSGNNSRRVTDIVSAIMANNPGRPIPTNKVQSFKEPDEVDTWLLSHPLQVPGALHFVERNASVISYGVQTNSSSESKRGQTEDPTFKFLVPLQVAAEREIARSLLGDPNFGWGLGFKEFARPAIITETTSALSVMGPVFFLAFSMFGFVLQLGALVTEKELKLRQAMTMMGVYDSAYWLSWLTWEGILTLVSSLFLVLFGMIFRFDFFLKNSFVLVFLLFLLFQFNMIGLAFALSSIISKSSSATTVGFLVFLIGFITQFVSATGFPYSSSYAVSRRVMWSLFPPNTFSAGLKLLLDATSTPKSSGISWSNRAVCEGGQATCVISINIIYQWLLGTFLFWFVLAIYFDNIIPNASGVRKPIFYFLAPGYWTGKGGNKVEEGSIFSCVGSVPLVEHNTPNDKDVLEEETEVKQQAMDGIADPNIAVQIHGLAKTYPGTTKLGCCKCTKTSPFHAVKGLWMNIAKDQLFCLLGPNGAGKTTTISCLTGINPVTGGDALIYGDSIRSSVGISNIRKMIGVCPQFDILWDALSSEQHLHLFASIKGLPPASIKSTAEKLLADVKLTGAAKVRAGSYSGGMKRRLSVAVALIGDPKLVFLDEPTTGMDPITRRHVWDIIQESKKGRAIILTTHSMEEADILSDRIGIMAKGRLRCIGTSIRLKSRFGTGFVATVSFIENKNDNNIGVGASHEPLKKFFKEHLKVEPTEENKAFMTFVIPHDKENLLTGFFEELQNRESEFGISDIQLGLATLEEVFLNIARQAELESATAEGNMVTLELASGISLEIPVGARFVGIPDTENAENPSGVMVEVYWQQDGSGSMCISGHSSEMRVPQNVPVTRPPSPNALGHKSLRQGVRGIVIDL.

Helical transmembrane passes span 33-53 (CLQI…EEAM), 230-250 (GPVF…GALV), 277-297 (TWEG…GMIF), 307-327 (FVLV…LAFA), 341-361 (VGFL…TGFP), and 417-437 (VISI…WFVL). An ABC transporter domain is found at 519-764 (VQIHGLAKTY…FGTGFVATVS (246 aa)). ATP is bound at residue 565 to 572 (GPNGAGKT).

It belongs to the ABC transporter superfamily. ABCA family. CPR flippase (TC 3.A.1.211) subfamily.

The protein resides in the membrane. The chain is ABC transporter A family member 11 (ABCA11) from Arabidopsis thaliana (Mouse-ear cress).